A 131-amino-acid polypeptide reads, in one-letter code: Small ribosomal subunit protein uS11 (131 aa).

Belongs to the universal ribosomal protein uS11 family. In terms of assembly, part of the 30S ribosomal subunit.

In terms of biological role, located on the platform of the 30S subunit. The sequence is that of Small ribosomal subunit protein uS11 from Haloquadratum walsbyi (strain DSM 16790 / HBSQ001).